The following is a 256-amino-acid chain: Putative transposase for insertion sequence element IS112 (256 aa).

It belongs to the transposase 11 family.

Involved in the transposition of the insertion sequence IS112 which inactivates the SalI restriction-modification system. This chain is Putative transposase for insertion sequence element IS112, found in Streptomyces albus G.